Here is a 92-residue protein sequence, read N- to C-terminus: Bombyxin A-3 (92 aa).

A signal peptide spans 1-19 (MKILLAIALMLSTVMWVST). Glutamine 20 carries the post-translational modification Pyrrolidone carboxylic acid. Disulfide bonds link cysteine 29–cysteine 79, cysteine 41–cysteine 92, and cysteine 78–cysteine 83. Residues 50–70 (SDAQYVSYGSAWLMPYSEGRG) constitute a propeptide, c peptide like.

This sequence belongs to the insulin family. As to quaternary structure, heterodimer of a B chain and an A chain linked by two disulfide bonds.

The protein resides in the secreted. Its function is as follows. Brain peptide responsible for activation of prothoracic glands to produce ecdysone in insects. In Bombyx mori (Silk moth), this protein is Bombyxin A-3 (BBXA3).